Here is a 524-residue protein sequence, read N- to C-terminus: MLTCNKAGSRMVVDAASSNGPFQPVALLHIRDVPPADQEKLFIQKLRQCCVLFDFVSDPLSDLKWKEVKRAALSEMVEYITHNRNVITEPIYPEVVHMFAVNMFRTLPPSSNPTGAEFDPEEDEPTLEAAWPHLQLVYEFFLRFLESPDFQPNIAKKYIDQKFVLQLLELFDSEDPRERDFLKTTLHRIYGKFLGLRAYIRKQINNIFYRFIYETEHHNGIAELLEILGSIINGFALPLKEEHKIFLLKVLLPLHKVKSLSVYHPQLAYCVVQFLEKDSTLTEPVVMALLKYWPKTHSPKEVMFLNELEEILDVIEPSEFVKIMEPLFRQLAKCVSSPHFQVAERALYYWNNEYIMSLISDNAAKILPIMFPSLYRNSKTHWNKTIHGLIYNALKLFMEMNQKLFDDCTQQFKAEKLKEKLKMKEREEAWVKIENLAKANPQYSLCSHASTVSMPLAMETDGPLFEDVQMLRKTVSDEARQAQKDPKKERPLARRKSELPQDPHTKKALEAHCRADELVPQDGR.

At methionine 1 the chain carries N-acetylmethionine. The Nuclear localization signal signature appears at 472–489 (RKTVSDEARQAQKDPKKE). The segment at 476 to 524 (SDEARQAQKDPKKERPLARRKSELPQDPHTKKALEAHCRADELVPQDGR) is disordered.

It belongs to the phosphatase 2A regulatory subunit B56 family. In terms of assembly, PP2A consists of a common heterodimeric core enzyme, composed of PPP2CA a 36 kDa catalytic subunit (subunit C) and PPP2R1A a 65 kDa constant regulatory subunit (PR65 or subunit A), that associates with a variety of regulatory subunits. Proteins that associate with the core dimer include three families of regulatory subunits B (the R2/B/PR55/B55, R3/B''/PR72/PR130/PR59 and R5/B'/B56 families), the 48 kDa variable regulatory subunit, viral proteins, and cell signaling molecules. Interacts with SGO1. Interacts with SGO1; the interaction is direct. May interact with TP53. Interacts with IER3 and/or ERK kinases; regulates ERK dephosphorylation Interacts with CIP2A; this interaction stabilizes CIP2A. As to expression, highly expressed in testis, heart and spleen. Also found in brain and skeletal muscle.

It localises to the nucleus. It is found in the chromosome. The protein resides in the centromere. Its function is as follows. The B regulatory subunit might modulate substrate selectivity and catalytic activity, and might also direct the localization of the catalytic enzyme to a particular subcellular compartment. The PP2A-PPP2R5C holoenzyme may activate TP53 and play a role in DNA damage-induced inhibition of cell proliferation. PP2A-PPP2R5C may also regulate the ERK signaling pathway through ERK dephosphorylation. This is Serine/threonine-protein phosphatase 2A 56 kDa regulatory subunit gamma isoform (PPP2R5C) from Oryctolagus cuniculus (Rabbit).